A 128-amino-acid polypeptide reads, in one-letter code: Small ribosomal subunit protein uS11 (128 aa).

The protein belongs to the universal ribosomal protein uS11 family. Part of the 30S ribosomal subunit. Interacts with proteins S7 and S18. Binds to IF-3.

Located on the platform of the 30S subunit, it bridges several disparate RNA helices of the 16S rRNA. Forms part of the Shine-Dalgarno cleft in the 70S ribosome. This is Small ribosomal subunit protein uS11 from Onion yellows phytoplasma (strain OY-M).